A 642-amino-acid polypeptide reads, in one-letter code: Chaperone protein DnaK (642 aa).

Phosphothreonine; by autocatalysis is present on threonine 200. Residues 608–618 (QAESQAAGEGQ) show a composition bias toward low complexity. Residues 608-642 (QAESQAAGEGQPDAGKKDDGNVVDAEFEEVKKDKQ) form a disordered region.

It belongs to the heat shock protein 70 family.

In terms of biological role, acts as a chaperone. The polypeptide is Chaperone protein DnaK (Laribacter hongkongensis (strain HLHK9)).